The sequence spans 25 residues: GLLDTLKGAAKNVVGSLASKVMEKL.

At Leu-25 the chain carries Leucine amide.

Expressed by the skin glands.

Its subcellular location is the secreted. Functionally, antibacterial peptide that inhibits reference strains of both Gram-negative bacteria (E.coli, E.cloacae, K.pneumoniae, P.aeruginosa) and Gram-positive bacteria (S.aureus, S.epidermidis, E.faecalis, Streptococcus group B) with relatively low potencies (MIC=25-200 uM). The peptide shows very low hemolytic activity against human erythrocytes. Wheel projection demonstrates the amphipathicity of the alpha-helices is low which may explain the low antibacterial potency. This chain is Ocellatin-P1, found in Leptodactylus pentadactylus (Smokey jungle frog).